The sequence spans 509 residues: Cytochrome P450 6A1 (509 aa).

Cys449 contacts heme.

It belongs to the cytochrome P450 family. Heme serves as cofactor.

The protein resides in the endoplasmic reticulum membrane. It localises to the microsome membrane. It catalyses the reaction an organic molecule + reduced [NADPH--hemoprotein reductase] + O2 = an alcohol + oxidized [NADPH--hemoprotein reductase] + H2O + H(+). Its function is as follows. Involved in the metabolism of insect hormones and in the breakdown of synthetic insecticides. The polypeptide is Cytochrome P450 6A1 (CYP6A1) (Musca domestica (House fly)).